Reading from the N-terminus, the 151-residue chain is MAELKVTAIKEGTVIDHIPAGKGLKVIEILHLSRPNGGVLLLASNVHSKKLGKKDIVKIEGKFLSEEEVNKISLIAPTATVNIVRDYGVAEKFNVEIPDEIVGILRCANPNCVSNHEYVTSKFYVVSREPLKVRCHYCERTMEESEILSNL.

Zn(2+) is bound by residues cysteine 107, cysteine 112, cysteine 135, and cysteine 138.

The protein belongs to the PyrI family. As to quaternary structure, contains catalytic and regulatory chains. Zn(2+) serves as cofactor.

Its function is as follows. Involved in allosteric regulation of aspartate carbamoyltransferase. The protein is Aspartate carbamoyltransferase regulatory chain of Thermococcus onnurineus (strain NA1).